The following is a 213-amino-acid chain: Carboxysome shell protein CcmP (213 aa).

BMC circularly permuted domains lie at 4–106 (ELRS…RLKP) and 107–211 (KIVS…GDRS). The Probably important for pore gating signature appears at 69 to 70 (ER).

It belongs to the EutL/PduB family. As to quaternary structure, a dimer of stacked trimers, the same faces interact.

Its subcellular location is the carboxysome. Functionally, probably part of the carboxysome shell, a polyhedral inclusion where RuBisCO (ribulose bisphosphate carboxylase, rbcL-rbcS) is sequestered. It is thought that this protein controls transport of RuBisCO reactants in and out of the carboxysome; residual densities in the 4 X-ray structures suggest that differing compounds bind in interior pockets, depending on the open or closed state of the pore. The polypeptide is Carboxysome shell protein CcmP (Synechococcus elongatus (strain ATCC 33912 / PCC 7942 / FACHB-805) (Anacystis nidulans R2)).